Here is a 948-residue protein sequence, read N- to C-terminus: Zinc finger CCCH domain-containing protein 3 (948 aa).

Disordered regions lie at residues 25-108, 121-219, 265-296, and 336-493; these read HGNA…VPQQ, QNVV…RRTV, VDAGHTDQPVPSGSVGGPARPASGPRQAREAS, and NVCK…LKKT. Residues 56–74 are compositionally biased toward basic residues; that stretch reads RPSRRGYSSHHGPSWRKKY. A compositionally biased stretch (low complexity) spans 128–141; sequence KPPSKSGSASASGA. The span at 157–166 shows a compositional bias: basic and acidic residues; sequence QRPREGEGEP. Low complexity predominate over residues 372 to 398; it reads SAPSKYKWKASSPSASSSSSFRWQSEA. Positions 405–415 are enriched in polar residues; the sequence is SQLSPVLSRSP. At Ser408 the chain carries Phosphoserine. A compositionally biased stretch (basic residues) spans 441–452; sequence VKSRTKIIRRRS. 5 consecutive C3H1-type zinc fingers follow at residues 667-695, 699-722, 723-749, 750-777, and 778-800; these read EKRKEYCMYYNRFGRCNRGERCPYIHDPE, VCTRFVRGTCKKTDGTCPFSHHVS, KEKMPVCSYFLKGICSNSNCPYSHVYV, SRKAEVCSDFLKGYCPLGAKCKKKHTLL, and CPDFARRGACPRGAQCQLLHRTQ. Disordered stretches follow at residues 798-891 and 913-948; these read RTQK…HEAP and ISLQSSPSPGAQPRVRAPRAPLTKDSGKPLHIKPRL. Residues 834–846 show a composition bias toward polar residues; that stretch reads SASQRPTRQTPSS. Low complexity-rich tracts occupy residues 847 to 856 and 864 to 885; these read AALTAAAVAA and SASPSSSKASSSSSSSSSPPAS. Residues Ser918 and Ser920 each carry the phosphoserine modification.

As to quaternary structure, interacts with SMAD1, SMAD3, SMAD4, CPSF2 and CPSF3.

The protein localises to the nucleus. Functionally, required for the export of polyadenylated mRNAs from the nucleus. Enhances ACVR1B-induced SMAD-dependent transcription. Binds to single-stranded DNA but not to double-stranded DNA in vitro. Involved in RNA cleavage. The sequence is that of Zinc finger CCCH domain-containing protein 3 (ZC3H3) from Homo sapiens (Human).